Consider the following 806-residue polypeptide: Leucine--tRNA ligase (806 aa).

The 'HIGH' region signature appears at 40–51 (PYPSGKGLHVGH). The 'KMSKS' region motif lies at 580–584 (KMSKS). Residue lysine 583 participates in ATP binding.

The protein belongs to the class-I aminoacyl-tRNA synthetase family.

The protein resides in the cytoplasm. It catalyses the reaction tRNA(Leu) + L-leucine + ATP = L-leucyl-tRNA(Leu) + AMP + diphosphate. This chain is Leucine--tRNA ligase, found in Ureaplasma parvum serovar 3 (strain ATCC 27815 / 27 / NCTC 11736).